Consider the following 511-residue polypeptide: Maturase K (511 aa).

This sequence belongs to the intron maturase 2 family. MatK subfamily.

It localises to the plastid. It is found in the chloroplast. In terms of biological role, usually encoded in the trnK tRNA gene intron. Probably assists in splicing its own and other chloroplast group II introns. In Hordeum vulgare subsp. spontaneum (Wild barley), this protein is Maturase K.